The following is a 346-amino-acid chain: Holliday junction branch migration complex subunit RuvB (346 aa).

The interval 1–181 is large ATPase domain (RuvB-L); it reads MSDRNPLIDA…FGIPVRLNFY (181 aa). Residues Leu20, Arg21, Gly62, Lys65, Thr66, Thr67, 128–130, Arg171, Tyr181, and Arg218 each bind ATP; that span reads EDF. Thr66 serves as a coordination point for Mg(2+). Positions 182–252 are small ATPAse domain (RuvB-S); sequence TVEELEYIVR…IADEALSRLE (71 aa). Positions 255 to 346 are head domain (RuvB-H); sequence NRGLDQLDRR…SQYGLFMEDE (92 aa). Arg291, Arg310, and Arg315 together coordinate DNA.

It belongs to the RuvB family. In terms of assembly, homohexamer. Forms an RuvA(8)-RuvB(12)-Holliday junction (HJ) complex. HJ DNA is sandwiched between 2 RuvA tetramers; dsDNA enters through RuvA and exits via RuvB. An RuvB hexamer assembles on each DNA strand where it exits the tetramer. Each RuvB hexamer is contacted by two RuvA subunits (via domain III) on 2 adjacent RuvB subunits; this complex drives branch migration. In the full resolvosome a probable DNA-RuvA(4)-RuvB(12)-RuvC(2) complex forms which resolves the HJ.

It localises to the cytoplasm. It carries out the reaction ATP + H2O = ADP + phosphate + H(+). Its function is as follows. The RuvA-RuvB-RuvC complex processes Holliday junction (HJ) DNA during genetic recombination and DNA repair, while the RuvA-RuvB complex plays an important role in the rescue of blocked DNA replication forks via replication fork reversal (RFR). RuvA specifically binds to HJ cruciform DNA, conferring on it an open structure. The RuvB hexamer acts as an ATP-dependent pump, pulling dsDNA into and through the RuvAB complex. RuvB forms 2 homohexamers on either side of HJ DNA bound by 1 or 2 RuvA tetramers; 4 subunits per hexamer contact DNA at a time. Coordinated motions by a converter formed by DNA-disengaged RuvB subunits stimulates ATP hydrolysis and nucleotide exchange. Immobilization of the converter enables RuvB to convert the ATP-contained energy into a lever motion, pulling 2 nucleotides of DNA out of the RuvA tetramer per ATP hydrolyzed, thus driving DNA branch migration. The RuvB motors rotate together with the DNA substrate, which together with the progressing nucleotide cycle form the mechanistic basis for DNA recombination by continuous HJ branch migration. Branch migration allows RuvC to scan DNA until it finds its consensus sequence, where it cleaves and resolves cruciform DNA. This chain is Holliday junction branch migration complex subunit RuvB, found in Brucella melitensis biotype 2 (strain ATCC 23457).